Here is a 600-residue protein sequence, read N- to C-terminus: MVNNMTDLTAQEPAWQTRDHLDDPVIGELRNRFGPDAFTVQATRTGVPVVWIKREQLLEVGDFLKKLPKPYVMLFDLHGMDERLRTHREGLPAADFSVFYHLISIDRNRDIMLKVALAENDLHVPTFTKLFPNANWYERETWDLFGITFDGHPNLRRIMMPQTWKGHPLRKDYPARATEFSPFELTKAKQDLEMEALTFKPEEWGMKRGTENEDFMFLNLGPNHPSAHGAFRIVLQLDGEEIVDCVPDIGYHHRGAEKMGERQSWHSYIPYTDRIEYLGGCVNEMPYVLAVEKLAGITVPARVNVIRVMLSELFRINSHLLYISTFIQDVGAMTPVFFAFTDRQKIYDLVEAITGFRMHPAWFRIGGVAHDLPRGWDRLLREFLDWMPKRLASYEKAALQNTILKGRSQGVAAYGAKEALEWGTTGAGLRATGIDFDVRKARPYSGYENFDFEIPVGGGVSDCYTRVMLKVEELRQSLRILEQCLNNMPEGPFKADHPLTTPPPKERTLQHIETLITHFLQVSWGPVMPANESFQMIEATKGINSYYLTSDGSTMSYRTRIRTPSYAHLQQIPAAIRGSLVSDLIVYLGSIDFVMSDVDR.

The segment at 1 to 190 (MVNNMTDLTA…SPFELTKAKQ (190 aa)) is NADH dehydrogenase I subunit C. The segment at 214 to 600 (DFMFLNLGPN…IDFVMSDVDR (387 aa)) is NADH dehydrogenase I subunit D.

This sequence in the N-terminal section; belongs to the complex I 30 kDa subunit family. In the C-terminal section; belongs to the complex I 49 kDa subunit family. In terms of assembly, NDH-1 is composed of 13 different subunits. Subunits NuoB, CD, E, F, and G constitute the peripheral sector of the complex.

Its subcellular location is the cell inner membrane. It carries out the reaction a quinone + NADH + 5 H(+)(in) = a quinol + NAD(+) + 4 H(+)(out). Its function is as follows. NDH-1 shuttles electrons from NADH, via FMN and iron-sulfur (Fe-S) centers, to quinones in the respiratory chain. The immediate electron acceptor for the enzyme in this species is believed to be ubiquinone. Couples the redox reaction to proton translocation (for every two electrons transferred, four hydrogen ions are translocated across the cytoplasmic membrane), and thus conserves the redox energy in a proton gradient. The polypeptide is NADH-quinone oxidoreductase subunit C/D (Escherichia coli O157:H7).